An 81-amino-acid polypeptide reads, in one-letter code: Centromere protein X (81 aa).

M1 carries the post-translational modification N-acetylmethionine.

The protein belongs to the CENP-X/MHF2 family. In terms of assembly, heterodimer with CENPX, sometimes called MHF; this interaction stabilizes both partners. MHF heterodimers can assemble to form tetrameric structures. MHF also coassemble with CENPT-CENPW heterodimers at centromeres to form the tetrameric CENP-T-W-S-X complex. Forms a discrete complex with FANCM and CENPX, called FANCM-MHF; this interaction, probably mediated by direct binding between CENPS and FANCM, leads to synergistic activation of double-stranded DNA binding and strongly stimulates FANCM-mediated DNA remodeling. Recruited by FANCM to the Fanconi anemia (FA) core complex, which consists of CENPS, CENPX, FANCA, FANCB, FANCC, FANCE, FANCF, FANCG, FANCL, FANCM, FAAP24 and FAAP100. The FA core complex associates with Bloom syndrome (BLM) complex, which consists of at least BLM, DNA topoisomerase 3-alpha (TOP3A), RMI1/BLAP75, RPA1/RPA70 and RPA2/RPA32. The super complex between FA and BLM is called BRAFT.

Its subcellular location is the nucleus. It localises to the chromosome. The protein resides in the centromere. The protein localises to the kinetochore. Its function is as follows. DNA-binding component of the Fanconi anemia (FA) core complex. Required for the normal activation of the FA pathway, leading to monoubiquitination of the FANCI-FANCD2 complex in response to DNA damage, cellular resistance to DNA cross-linking drugs, and prevention of chromosomal breakage. In complex with CENPS (MHF heterodimer), crucial cofactor for FANCM in both binding and ATP-dependent remodeling of DNA. Stabilizes FANCM. In complex with CENPS and FANCM (but not other FANC proteins), rapidly recruited to blocked forks and promotes gene conversion at blocked replication forks. In complex with CENPS, CENPT and CENPW (CENP-T-W-S-X heterotetramer), involved in the formation of a functional kinetochore outer plate, which is essential for kinetochore-microtubule attachment and faithful mitotic progression. As a component of MHF and CENP-T-W-S-X complexes, binds DNA and bends it to form a nucleosome-like structure. DNA-binding function is fulfilled in the presence of CENPS, with the following preference for DNA substates: Holliday junction &gt; double-stranded &gt; splay arm &gt; single-stranded. Does not bind DNA on its own. This is Centromere protein X (CENPX) from Pongo abelii (Sumatran orangutan).